The following is a 110-amino-acid chain: UPF0060 membrane protein AHA_2410 (110 aa).

The next 4 helical transmembrane spans lie at 8–28 (GLFL…YLWL), 33–53 (SVWL…LLSL), 63–83 (AAYG…VDGI), and 87–107 (LWDL…MFAP).

The protein belongs to the UPF0060 family.

The protein resides in the cell inner membrane. The sequence is that of UPF0060 membrane protein AHA_2410 from Aeromonas hydrophila subsp. hydrophila (strain ATCC 7966 / DSM 30187 / BCRC 13018 / CCUG 14551 / JCM 1027 / KCTC 2358 / NCIMB 9240 / NCTC 8049).